Here is a 148-residue protein sequence, read N- to C-terminus: 2S seed storage protein 1 (148 aa).

Positions Met1 to Ala19 are cleaved as a signal peptide. Positions Ser20 to Asn38 are excised as a propeptide. The interval Thr24–Lys94 is involved in IgE-binding. 4 disulfide bridges follow: Cys42–Cys97, Cys54–Cys86, Cys87–Cys133, and Cys99–Cys141. Immunodominant epitope; binds to IgE of 14 patients out of 15 tested stretches follow at residues Ser46–Met55, Gln48–Trp57, and Asn76–Cys86. Residues Phe69–Asn76 constitute a propeptide that is removed on maturation. Residues Phe147–Ala148 constitute a propeptide that is removed on maturation.

This sequence belongs to the 2S seed storage albumins family. The mature protein consists of a small and a large chain linked by disulfide bonds. In terms of tissue distribution, expressed in seeds (at protein level).

Functionally, seed storage protein. The sequence is that of 2S seed storage protein 1 from Sesamum indicum (Oriental sesame).